Here is a 269-residue protein sequence, read N- to C-terminus: Shikimate dehydrogenase (NADP(+)) (269 aa).

Shikimate is bound by residues 14-16 and Thr-60; that span reads TLS. Lys-64 functions as the Proton acceptor in the catalytic mechanism. Residue Asp-76 coordinates NADP(+). Asn-85 and Asp-100 together coordinate shikimate. Residues 122–126 and Met-208 contribute to the NADP(+) site; that span reads GAGGA. Tyr-210 is a shikimate binding site. Residue Gly-232 coordinates NADP(+).

It belongs to the shikimate dehydrogenase family. Homodimer.

The catalysed reaction is shikimate + NADP(+) = 3-dehydroshikimate + NADPH + H(+). The protein operates within metabolic intermediate biosynthesis; chorismate biosynthesis; chorismate from D-erythrose 4-phosphate and phosphoenolpyruvate: step 4/7. Its function is as follows. Involved in the biosynthesis of the chorismate, which leads to the biosynthesis of aromatic amino acids. Catalyzes the reversible NADPH linked reduction of 3-dehydroshikimate (DHSA) to yield shikimate (SA). The sequence is that of Shikimate dehydrogenase (NADP(+)) from Caldivirga maquilingensis (strain ATCC 700844 / DSM 13496 / JCM 10307 / IC-167).